Consider the following 530-residue polypeptide: Hyalin (530 aa).

HYR domains lie at 1–66 (NVEI…TVTA), 67–150 (TDSI…NVVE), 151–234 (VDTT…NVVE), 235–319 (VDTT…NVVE), 320–403 (VDTT…NIVE), 404–486 (EDTT…TVNT), and 487–530 (VDTT…ASLV).

In terms of assembly, homooligomer in presence of calcium. In terms of processing, glycosylated.

It is found in the secreted. Its subcellular location is the extracellular space. The protein localises to the extracellular matrix. Functionally, major constituent of the hyaline layer. The hyaline layer of echinoderm embryos is an extraembryonic matrix that functions as a substrate for cell adhesion through early development. In Lytechinus variegatus (Green sea urchin), this protein is Hyalin.